We begin with the raw amino-acid sequence, 367 residues long: tRNA 2-selenouridine synthase (367 aa).

Residues 15–138 (FLQARPLIDV…LRTFLIQILE (124 aa)) enclose the Rhodanese domain. Catalysis depends on Cys98, which acts as the S-selanylcysteine intermediate.

Belongs to the SelU family. Monomer.

It catalyses the reaction 5-methylaminomethyl-2-thiouridine(34) in tRNA + selenophosphate + (2E)-geranyl diphosphate + H2O + H(+) = 5-methylaminomethyl-2-selenouridine(34) in tRNA + (2E)-thiogeraniol + phosphate + diphosphate. The catalysed reaction is 5-methylaminomethyl-2-thiouridine(34) in tRNA + (2E)-geranyl diphosphate = 5-methylaminomethyl-S-(2E)-geranyl-thiouridine(34) in tRNA + diphosphate. It carries out the reaction 5-methylaminomethyl-S-(2E)-geranyl-thiouridine(34) in tRNA + selenophosphate + H(+) = 5-methylaminomethyl-2-(Se-phospho)selenouridine(34) in tRNA + (2E)-thiogeraniol. The enzyme catalyses 5-methylaminomethyl-2-(Se-phospho)selenouridine(34) in tRNA + H2O = 5-methylaminomethyl-2-selenouridine(34) in tRNA + phosphate. Functionally, involved in the post-transcriptional modification of the uridine at the wobble position (U34) of tRNA(Lys), tRNA(Glu) and tRNA(Gln). Catalyzes the conversion of 2-thiouridine (S2U-RNA) to 2-selenouridine (Se2U-RNA). Acts in a two-step process involving geranylation of 2-thiouridine (S2U) to S-geranyl-2-thiouridine (geS2U) and subsequent selenation of the latter derivative to 2-selenouridine (Se2U) in the tRNA chain. The chain is tRNA 2-selenouridine synthase from Shewanella denitrificans (strain OS217 / ATCC BAA-1090 / DSM 15013).